The primary structure comprises 214 residues: Thymidylate kinase (214 aa).

10–17 is an ATP binding site; it reads GPDGAGKT.

This sequence belongs to the thymidylate kinase family.

It carries out the reaction dTMP + ATP = dTDP + ADP. Its function is as follows. Phosphorylation of dTMP to form dTDP in both de novo and salvage pathways of dTTP synthesis. This chain is Thymidylate kinase, found in Lacticaseibacillus casei (strain BL23) (Lactobacillus casei).